The sequence spans 242 residues: MAGHSKWANIKHKKAAADAKRGKIWTRLIKEIQVAARLGGGDVNSNPRLRLAVDKAADANMPKDNVKRAIDRGVGGADGANYEEIRYEGYGISGAAIIVDTLTDNRTRTVAEVRHAFSKFGGNMGTDGSVAFMFDHVGQFLFAPGTSEDALMEAALEAGANDVNTNDDGSIEVLCDWQAFSAVKDALEAGGFKAELAEVTMKPQNEVEFTGDDAAKMQKLLDALENLDDVQDVYTNAVIVEE.

Belongs to the TACO1 family.

Its subcellular location is the cytoplasm. The protein is Probable transcriptional regulatory protein Bcep18194_A5621 of Burkholderia lata (strain ATCC 17760 / DSM 23089 / LMG 22485 / NCIMB 9086 / R18194 / 383).